We begin with the raw amino-acid sequence, 201 residues long: Ubiquinone biosynthesis accessory factor UbiJ (201 aa).

One can recognise an SCP2 domain in the interval 15 to 112; the sequence is LNTFLYRSPA…QVVQNFVALA (98 aa).

It belongs to the UbiJ family. In terms of assembly, component of the Ubi complex metabolon, which regroups five ubiquinone biosynthesis proteins (UbiE, UbiF, UbiG, UbiH and UbiI) and two accessory factors (UbiK and the lipid-binding protein UbiJ). Interacts with UbiK and forms a complex composed of 2 UbiK subunits and 1 UbiJ subunit. The UbiK-UbiJ complex interacts with palmitoleic acid.

Its subcellular location is the cytoplasm. The protein operates within cofactor biosynthesis; ubiquinone biosynthesis. Its function is as follows. Required for ubiquinone (coenzyme Q) biosynthesis under aerobic conditions. Binds hydrophobic ubiquinone biosynthetic intermediates via its SCP2 domain and is essential for the stability of the Ubi complex. May constitute a docking platform where Ubi enzymes assemble and access their SCP2-bound polyprenyl substrates. The protein is Ubiquinone biosynthesis accessory factor UbiJ of Escherichia coli (strain K12).